The primary structure comprises 426 residues: Glutamate-1-semialdehyde 2,1-aminomutase (426 aa).

Lys265 is modified (N6-(pyridoxal phosphate)lysine).

This sequence belongs to the class-III pyridoxal-phosphate-dependent aminotransferase family. HemL subfamily. As to quaternary structure, homodimer. Pyridoxal 5'-phosphate serves as cofactor.

It is found in the cytoplasm. It catalyses the reaction (S)-4-amino-5-oxopentanoate = 5-aminolevulinate. It functions in the pathway porphyrin-containing compound metabolism; protoporphyrin-IX biosynthesis; 5-aminolevulinate from L-glutamyl-tRNA(Glu): step 2/2. The polypeptide is Glutamate-1-semialdehyde 2,1-aminomutase (Erwinia tasmaniensis (strain DSM 17950 / CFBP 7177 / CIP 109463 / NCPPB 4357 / Et1/99)).